Reading from the N-terminus, the 303-residue chain is Cell division protein ZipA (303 aa).

Residues M1–R6 lie on the Periplasmic side of the membrane. Residues L7–T27 form a helical membrane-spanning segment. Residues S28–V303 lie on the Cytoplasmic side of the membrane. 3 disordered regions span residues R39–F61, K66–I85, and E124–E159. 2 stretches are compositionally biased toward basic and acidic residues: residues S75–I85 and E139–E159.

It belongs to the ZipA family. As to quaternary structure, interacts with FtsZ via their C-terminal domains.

Its subcellular location is the cell inner membrane. Essential cell division protein that stabilizes the FtsZ protofilaments by cross-linking them and that serves as a cytoplasmic membrane anchor for the Z ring. Also required for the recruitment to the septal ring of downstream cell division proteins. This is Cell division protein ZipA from Photorhabdus laumondii subsp. laumondii (strain DSM 15139 / CIP 105565 / TT01) (Photorhabdus luminescens subsp. laumondii).